Consider the following 894-residue polypeptide: Valine--tRNA ligase (894 aa).

Positions 48-58 (PNVTGFLHMGH) match the 'HIGH' region motif. The short motif at 527–531 (KMSKS) is the 'KMSKS' region element. Position 530 (Lys530) interacts with ATP. A coiled-coil region spans residues 827–852 (LVDFDEEVKRINKSIEKLTRDIGMLS).

Belongs to the class-I aminoacyl-tRNA synthetase family. ValS type 1 subfamily. In terms of assembly, monomer.

It is found in the cytoplasm. It carries out the reaction tRNA(Val) + L-valine + ATP = L-valyl-tRNA(Val) + AMP + diphosphate. Functionally, catalyzes the attachment of valine to tRNA(Val). As ValRS can inadvertently accommodate and process structurally similar amino acids such as threonine, to avoid such errors, it has a 'posttransfer' editing activity that hydrolyzes mischarged Thr-tRNA(Val) in a tRNA-dependent manner. In Bdellovibrio bacteriovorus (strain ATCC 15356 / DSM 50701 / NCIMB 9529 / HD100), this protein is Valine--tRNA ligase.